The following is a 435-amino-acid chain: MLDSKLLRTELDETAAKLARRGFKLDVETIRKLEEQRKSIQVEVENLQSTRNSISKQIGQKMAAGDKEGAEEIKKQIGTLGSDLDAKKVELEQVMAQLDEFTLSVPNIPADEVPDGKDENDNVEISRWGEPKTYDFDLKDHVDLGEMGGGLDFASAVKITGARFIVMKGQFARLHRAIAQFMLDLHTEEHGYTEMYVPYLVNSDSLFGTGQLPKFGKDLFHTEPLAEKVNDEEPRKLSLIPTAEVPVTNLVRDTITDEADLPIKMTAHTPCFRSEAGSYGRDTRGLIRMHQFDKVELVQITKPEDSMTALEELTGHAEKVLQLLELPYRKVVLCTGDMGFGARKTYDLEVWVPAQETYREISSCSNMWDFQARRMQARFRRKGEKKPELVHTLNGSGLAVGRTMVAILENNQEADGRIAIPAVLQKYMGGATHIG.

242–244 provides a ligand contact to L-serine; the sequence is TAE. Residue 273-275 participates in ATP binding; it reads RSE. An L-serine-binding site is contributed by Glu296. 360-363 lines the ATP pocket; that stretch reads EISS. Ser396 contributes to the L-serine binding site.

The protein belongs to the class-II aminoacyl-tRNA synthetase family. Type-1 seryl-tRNA synthetase subfamily. As to quaternary structure, homodimer. The tRNA molecule binds across the dimer.

The protein resides in the cytoplasm. The catalysed reaction is tRNA(Ser) + L-serine + ATP = L-seryl-tRNA(Ser) + AMP + diphosphate + H(+). It carries out the reaction tRNA(Sec) + L-serine + ATP = L-seryl-tRNA(Sec) + AMP + diphosphate + H(+). It functions in the pathway aminoacyl-tRNA biosynthesis; selenocysteinyl-tRNA(Sec) biosynthesis; L-seryl-tRNA(Sec) from L-serine and tRNA(Sec): step 1/1. Catalyzes the attachment of serine to tRNA(Ser). Is also able to aminoacylate tRNA(Sec) with serine, to form the misacylated tRNA L-seryl-tRNA(Sec), which will be further converted into selenocysteinyl-tRNA(Sec). In Vibrio parahaemolyticus serotype O3:K6 (strain RIMD 2210633), this protein is Serine--tRNA ligase.